The chain runs to 244 residues: 3-deoxy-manno-octulosonate cytidylyltransferase (244 aa).

Belongs to the KdsB family.

The protein resides in the cytoplasm. It catalyses the reaction 3-deoxy-alpha-D-manno-oct-2-ulosonate + CTP = CMP-3-deoxy-beta-D-manno-octulosonate + diphosphate. It participates in nucleotide-sugar biosynthesis; CMP-3-deoxy-D-manno-octulosonate biosynthesis; CMP-3-deoxy-D-manno-octulosonate from 3-deoxy-D-manno-octulosonate and CTP: step 1/1. It functions in the pathway bacterial outer membrane biogenesis; lipopolysaccharide biosynthesis. Activates KDO (a required 8-carbon sugar) for incorporation into bacterial lipopolysaccharide in Gram-negative bacteria. The protein is 3-deoxy-manno-octulosonate cytidylyltransferase of Dichelobacter nodosus (strain VCS1703A).